Reading from the N-terminus, the 407-residue chain is Peptidase T (407 aa).

Position 82 (H82) interacts with Zn(2+). Residue D84 is part of the active site. D143 is a binding site for Zn(2+). E177 (proton acceptor) is an active-site residue. Residues E178, D200, and H382 each coordinate Zn(2+).

It belongs to the peptidase M20B family. Zn(2+) serves as cofactor.

The protein localises to the cytoplasm. The catalysed reaction is Release of the N-terminal residue from a tripeptide.. Its function is as follows. Cleaves the N-terminal amino acid of tripeptides. The polypeptide is Peptidase T (Streptococcus pyogenes serotype M3 (strain ATCC BAA-595 / MGAS315)).